The sequence spans 510 residues: UDP-N-acetylmuramoylalanine--D-glutamate ligase (510 aa).

138-144 (GTNGKTT) is an ATP binding site. The disordered stretch occupies residues 294-316 (FDEPAPAPRRKKDAPPPTRAGGR).

It belongs to the MurCDEF family.

It localises to the cytoplasm. It carries out the reaction UDP-N-acetyl-alpha-D-muramoyl-L-alanine + D-glutamate + ATP = UDP-N-acetyl-alpha-D-muramoyl-L-alanyl-D-glutamate + ADP + phosphate + H(+). It participates in cell wall biogenesis; peptidoglycan biosynthesis. Functionally, cell wall formation. Catalyzes the addition of glutamate to the nucleotide precursor UDP-N-acetylmuramoyl-L-alanine (UMA). The polypeptide is UDP-N-acetylmuramoylalanine--D-glutamate ligase (Bordetella bronchiseptica (strain ATCC BAA-588 / NCTC 13252 / RB50) (Alcaligenes bronchisepticus)).